A 446-amino-acid chain; its full sequence is MREIVHLQIGQCGNQIGAKFWEVISDEHGIDIAGNYCGNASLQLERINVYFNEAYSHKYVPRSILVDLEPGTMDSVRSSKIGPLFRPDNFIHGNSGAGNNWAKGHYTEGAELIENVMDVVRNECESCDCLQGFQLIHSLGGGTGSGMGTLLINKIREEYPDRIMNTFSVVPSPKVSDTVVEPYNAILSIHQLIENTDETFCIDNEALYDICFRTLKLTNPTYGDLNHLVSLTMSGVTTSLRFPGQLNADLRKLAVNMVPFPRLHFFMPGFAPLTARGSQQYRALSVPELTQQMFDARNMMAACDPRRGRYLTVACIFRGRMSTREVDEQLLSVQTKNSSYFVEWIPNNVKVAVCDIPPRGLKMAATFIGNNTAIQELFIRVSEQFSAMFRRKAFLHWYTGEGMDEMEFSEAEGNTNDLVSEYQQYQDATADVEEYEEAEASPEKET.

The short motif at 1–4 (MREI) is the MREI motif element. GTP is bound by residues Gln-11, Glu-69, Ser-138, Gly-142, Thr-143, Gly-144, Asn-204, and Asn-226. Residue Glu-69 participates in Mg(2+) binding. Residues 419–446 (VSEYQQYQDATADVEEYEEAEASPEKET) form a disordered region. Positions 430–440 (ADVEEYEEAEA) are enriched in acidic residues.

The protein belongs to the tubulin family. As to quaternary structure, dimer of alpha and beta chains. A typical microtubule is a hollow water-filled tube with an outer diameter of 25 nm and an inner diameter of 15 nM. Alpha-beta heterodimers associate head-to-tail to form protofilaments running lengthwise along the microtubule wall with the beta-tubulin subunit facing the microtubule plus end conferring a structural polarity. Microtubules usually have 13 protofilaments but different protofilament numbers can be found in some organisms and specialized cells. Requires Mg(2+) as cofactor. In terms of processing, some glutamate residues at the C-terminus are polyglycylated, resulting in polyglycine chains on the gamma-carboxyl group. Glycylation is mainly limited to tubulin incorporated into axonemes (cilia and flagella) whereas glutamylation is prevalent in neuronal cells, centrioles, axonemes, and the mitotic spindle. Both modifications can coexist on the same protein on adjacent residues, and lowering polyglycylation levels increases polyglutamylation, and reciprocally. The precise function of polyglycylation is still unclear. Post-translationally, some glutamate residues at the C-terminus are polyglutamylated, resulting in polyglutamate chains on the gamma-carboxyl group. Polyglutamylation plays a key role in microtubule severing by spastin (SPAST). SPAST preferentially recognizes and acts on microtubules decorated with short polyglutamate tails: severing activity by SPAST increases as the number of glutamates per tubulin rises from one to eight, but decreases beyond this glutamylation threshold. In terms of tissue distribution, highly expressed in bone marrow.

It is found in the cytoplasm. The protein resides in the cytoskeleton. Functionally, tubulin is the major constituent of microtubules, a cylinder consisting of laterally associated linear protofilaments composed of alpha- and beta-tubulin heterodimers. Microtubules grow by the addition of GTP-tubulin dimers to the microtubule end, where a stabilizing cap forms. Below the cap, tubulin dimers are in GDP-bound state, owing to GTPase activity of alpha-tubulin. This Gallus gallus (Chicken) protein is Tubulin beta-6 chain.